The following is a 276-amino-acid chain: Mitochondrial outer membrane protein porin 6 (276 aa).

This sequence belongs to the eukaryotic mitochondrial porin (TC 1.B.8.1) family.

The protein localises to the mitochondrion outer membrane. Its function is as follows. Forms a channel through the mitochondrial outer membrane that allows diffusion of small hydrophilic molecules. The channel adopts an open conformation at low or zero membrane potential and a closed conformation at potentials above 30-40 mV. The open state has a weak anion selectivity whereas the closed state is cation-selective. In Oryza sativa subsp. japonica (Rice), this protein is Mitochondrial outer membrane protein porin 6 (VDAC6).